A 108-amino-acid chain; its full sequence is Large ribosomal subunit protein uL23 (108 aa).

It belongs to the universal ribosomal protein uL23 family. Part of the 50S ribosomal subunit. Contacts protein L29, and trigger factor when it is bound to the ribosome.

Functionally, one of the early assembly proteins it binds 23S rRNA. One of the proteins that surrounds the polypeptide exit tunnel on the outside of the ribosome. Forms the main docking site for trigger factor binding to the ribosome. The protein is Large ribosomal subunit protein uL23 of Leptothrix cholodnii (strain ATCC 51168 / LMG 8142 / SP-6) (Leptothrix discophora (strain SP-6)).